Consider the following 136-residue polypeptide: Ergosterol biosynthetic protein 28 (136 aa).

Transmembrane regions (helical) follow at residues 18–34 (VVVSVAALFNTVQSFLT), 56–72 (FGIWTLLSAIVRFYCAY), 79–95 (VYFLCQCTYYLACFHFL), and 109–125 (GLLSPIVVSTVSIWFMA).

It belongs to the ERG28 family. In terms of assembly, heterotetramer of erg25, erg26, erg27 and erg28. Erg28 acts as a scaffold to tether erg27 and other 4,4-demethylation-related enzymes, forming a demethylation enzyme complex, in the endoplasmic reticulum.

It localises to the endoplasmic reticulum membrane. The protein operates within steroid metabolism; ergosterol biosynthesis. Its function is as follows. Part of the third module of ergosterol biosynthesis pathway that includes by the late steps of the pathway. Erg28 has a role as a scaffold to help anchor the catalytic components of the C-4 demethylation complex erg25, erg26 and erg27 to the endoplasmic reticulum. The third module or late pathway involves the ergosterol synthesis itself through consecutive reactions that mainly occur in the endoplasmic reticulum (ER) membrane. Firstly, the squalene synthase erg9 catalyzes the condensation of 2 farnesyl pyrophosphate moieties to form squalene, which is the precursor of all steroids. Secondly, squalene is converted into lanosterol by the consecutive action of the squalene epoxidase erg1 and the lanosterol synthase erg7. The lanosterol 14-alpha-demethylase erg11/cyp1 catalyzes C14-demethylation of lanosterol to produce 4,4'-dimethyl cholesta-8,14,24-triene-3-beta-ol. In the next steps, a complex process involving various demethylation, reduction and desaturation reactions catalyzed by the C-14 reductase erg24 and the C-4 demethylation complex erg25-erg26-erg27 leads to the production of zymosterol. Erg28 likely functions in the C-4 demethylation complex reaction by tethering erg26 and Erg27 to the endoplasmic reticulum or to facilitate interaction between these proteins. Then, the sterol 24-C-methyltransferase erg6 catalyzes the methyl transfer from S-adenosyl-methionine to the C-24 of zymosterol to form fecosterol. The C-8 sterol isomerase erg2 catalyzes the reaction which results in unsaturation at C-7 in the B ring of sterols and thus converts fecosterol to episterol. The sterol-C5-desaturases erg31 and erg32 then catalyze the introduction of a C-5 double bond in the B ring to produce 5-dehydroepisterol. The C-22 sterol desaturase erg5 further converts 5-dehydroepisterol into ergosta-5,7,22,24(28)-tetraen-3beta-ol by forming the C-22(23) double bond in the sterol side chain. Finally, ergosta-5,7,22,24(28)-tetraen-3beta-ol is substrate of the C-24(28) sterol reductase erg4 to produce ergosterol. In the genus Schizosaccharomyces, a second route exists between lanosterol and fecosterol, via the methylation of lanosterol to eburicol by erg6, followed by C14-demethylation by erg11/cyp1 and C4-demethylation by the demethylation complex erg25-erg26-erg27. In terms of biological role, extends the chronological lifespan when overexpressed. The sequence is that of Ergosterol biosynthetic protein 28 from Schizosaccharomyces pombe (strain 972 / ATCC 24843) (Fission yeast).